A 452-amino-acid polypeptide reads, in one-letter code: Isocitrate dehydrogenase [NADP], mitochondrial (452 aa).

Residues 1-39 constitute a mitochondrion transit peptide; that stretch reads MAGYLRVVRSLCRASGSRPAWAPAALTAPTSQEQTRRHY. N6-acetyllysine is present on residues Lys-45, Lys-48, Lys-67, and Lys-69. An N6-acetyllysine; alternate mark is found at Lys-80 and Lys-106. Residues Lys-80 and Lys-106 each carry the N6-succinyllysine; alternate modification. Residues 115-117 and Arg-122 each bind NADP(+); that span reads TIT. Thr-117 is a binding site for substrate. Substrate contacts are provided by residues 134-140 and Arg-149; that span reads SPNGTIR. Lys-155 bears the N6-acetyllysine mark. Position 166 is an N6-acetyllysine; alternate (Lys-166). Lys-166 is modified (N6-succinyllysine; alternate). Residue Arg-172 coordinates substrate. N6-acetyllysine; alternate is present on residues Lys-180 and Lys-193. 2 positions are modified to N6-succinyllysine; alternate: Lys-180 and Lys-193. Residue Lys-199 is modified to N6-acetyllysine. Lys-256 bears the N6-acetyllysine; alternate mark. Lys-256 is modified (N6-succinyllysine; alternate). N6-acetyllysine occurs at positions 263, 272, 275, and 280. At Lys-282 the chain carries N6-acetyllysine; alternate. The residue at position 282 (Lys-282) is an N6-succinyllysine; alternate. Residue Asp-291 coordinates Mn(2+). Lys-299 is an NADP(+) binding site. Mn(2+) is bound at residue Asp-314. NADP(+)-binding positions include 349–354 and Asn-367; that span reads GTVTRH. Position 384 is an N6-acetyllysine; alternate (Lys-384). Lys-384 carries the N6-succinyllysine; alternate modification. Lys-400, Lys-413, and Lys-442 each carry N6-acetyllysine.

The protein belongs to the isocitrate and isopropylmalate dehydrogenases family. As to quaternary structure, homodimer. The cofactor is Mg(2+). It depends on Mn(2+) as a cofactor. Acetylation at Lys-413 dramatically reduces catalytic activity. Deacetylated by SIRT3.

Its subcellular location is the mitochondrion. It catalyses the reaction D-threo-isocitrate + NADP(+) = 2-oxoglutarate + CO2 + NADPH. Its function is as follows. Plays a role in intermediary metabolism and energy production. It may tightly associate or interact with the pyruvate dehydrogenase complex. The sequence is that of Isocitrate dehydrogenase [NADP], mitochondrial (IDH2) from Macaca fascicularis (Crab-eating macaque).